Consider the following 102-residue polypeptide: Carboxysome shell protein CcmK3 (102 aa).

Residues 4 to 90 (AVGVIQTDGF…PPDNVETVMP (87 aa)) form the BMC domain.

Belongs to the bacterial microcompartments protein family. CcmK subfamily. Interacts stably with CcmK4, forming heterohexamers that can make dodecamers. Heterohexamers have a 1:2 CcmK3:CcmK4 stoichiometry. Upon expression in E.coli forms oligomers that could be dimers or trimers, but never hexamers; bulky residues in the pore region probably preclude the formation of homohexamers.

It localises to the carboxysome. In terms of biological role, a probably non-essential, minor shell protein of the carboxysome, a polyhedral inclusion where RuBisCO (ribulose bisphosphate carboxylase, rbcL-rbcS) is sequestered. Hexamers form sheets that form the facets of the polyhedral carboxysome. In PCC 7418 there are several CcmK paralogs with presumably functional differences. This subunit probably only makes heterohexamers with CcmK4. Heterohexamers can also make dodecamers, formation depends on buffer conditions. The sequence is that of Carboxysome shell protein CcmK3 from Halothece sp. (strain PCC 7418) (Synechococcus sp. (strain PCC 7418)).